The chain runs to 323 residues: Mortality factor 4-like protein 1 (323 aa).

Residues 12–62 (QEGERVLCFHGPLLYEAKCVKVAIKDKQVKYFIHHSGWNKNWDEWVPESRV) form the Tudor-knot domain. Residues 76-143 (LQKANQEQYA…RKKRARVDPT (68 aa)) are disordered. A sufficient for interaction with SIN3A region spans residues 94-227 (PGKKTSGLQQ…VAGIKEYFNV (134 aa)). Positions 96–107 (KKTSGLQQKNVD) match the Nuclear localization signal motif. An N6-acetyllysine modification is found at K104. The tract at residues 125–191 (STSETPQPPR…FYLPAKKNVD (67 aa)) is interaction with RB1-1. Positions 149-303 (TFMNRVEVKV…FLKYLAKNSA (155 aa)) are sufficient for interaction with PHF12. The MRG domain maps to 152–323 (NRVEVKVKIP…APPEYHRKAV (172 aa)). Residues 284-305 (LALLLNYLHDFLKYLAKNSATL) are interaction with RB1-2.

In terms of assembly, component of the NuA4 histone acetyltransferase complex which contains the catalytic subunit KAT5/TIP60 and the subunits EP400, TRRAP/PAF400, BRD8/SMAP, EPC1, DMAP1/DNMAP1, RUVBL1/TIP49, RUVBL2, ING3, actin, ACTL6A/BAF53A, MORF4L1/MRG15, MORF4L2/MRGX, MRGBP, YEATS4/GAS41, VPS72/YL1 and MEAF6. The NuA4 complex interacts with MYC and the adenovirus E1A protein. MORF4L1 may also participate in the formation of NuA4 related complexes which lack the KAT5/TIP60 catalytic subunit, but which include the SWI/SNF related protein SRCAP. Component of the mSin3A histone deacetylase complex, which includes SIN3A, HDAC2, ARID4B, MORF4L1, RBBP4/RbAp48, and RBBP7/RbAp46. May also interact with PHF12 and one or more as yet undefined members of the TLE (transducin-like enhancer of split) family of transcriptional repressors. Component of the SIN3B complex, which includes SIN3B, HDAC2 or HDAC1, PHF12 and MORF4L1. Interacts with RB1 and KAT8. Interacts with the N-terminus of MRFAP1. Found in a complex composed of MORF4L1, MRFAP1 and RB1. Interacts with the entire BRCA complex, which contains BRCA1, PALB2, BRCA2 and RAD51. Interacts with PALB2. Forms a complex with MSL1 and NUPR1.

It is found in the nucleus. Functionally, component of the NuA4 histone acetyltransferase (HAT) complex which is involved in transcriptional activation of select genes principally by acetylation of nucleosomal histones H4 and H2A. This modification may both alter nucleosome - DNA interactions and promote interaction of the modified histones with other proteins which positively regulate transcription. This complex may be required for the activation of transcriptional programs associated with oncogene and proto-oncogene mediated growth induction, tumor suppressor mediated growth arrest and replicative senescence, apoptosis, and DNA repair. The NuA4 complex ATPase and helicase activities seem to be, at least in part, contributed by the association of RUVBL1 and RUVBL2 with EP400. NuA4 may also play a direct role in DNA repair when directly recruited to sites of DNA damage. As part of the SIN3B complex represses transcription and counteracts the histone acetyltransferase activity of EP300 through the recognition H3K27ac marks by PHF12 and the activity of the histone deacetylase HDAC2. SIN3B complex is recruited downstream of the constitutively active genes transcriptional start sites through interaction with histones and mitigates histone acetylation and RNA polymerase II progression within transcribed regions contributing to the regulation of transcription. Required for homologous recombination repair (HRR) and resistance to mitomycin C (MMC). Involved in the localization of PALB2, BRCA2 and RAD51, but not BRCA1, to DNA-damage foci. This Pongo abelii (Sumatran orangutan) protein is Mortality factor 4-like protein 1 (MORF4L1).